The following is a 315-amino-acid chain: Olfactory receptor 51L1 (315 aa).

At methionine 1–serine 27 the chain is on the extracellular side. N-linked (GlcNAc...) asparagine glycosylation is present at asparagine 5. Residues tryptophan 28–leucine 48 form a helical membrane-spanning segment. Topologically, residues serine 49–serine 56 are cytoplasmic. A helical transmembrane segment spans residues leucine 57 to leucine 77. The Extracellular segment spans residues serine 78–alanine 101. Cysteine 99 and cysteine 191 are joined by a disulfide. Residues glutamine 102–phenylalanine 122 traverse the membrane as a helical segment. The Cytoplasmic segment spans residues aspartate 123–serine 141. A helical membrane pass occupies residues valine 142–proline 162. The Extracellular portion of the chain corresponds to leucine 163–serine 198. A helical transmembrane segment spans residues isoleucine 199–serine 219. Over tyrosine 220–alanine 239 the chain is Cytoplasmic. The helical transmembrane segment at leucine 240–valine 260 threads the bilayer. Topologically, residues serine 261–histidine 275 are extracellular. A helical membrane pass occupies residues isoleucine 276–valine 296. The Cytoplasmic portion of the chain corresponds to arginine 297–phenylalanine 315.

It belongs to the G-protein coupled receptor 1 family.

Its subcellular location is the cell membrane. Odorant receptor. The protein is Olfactory receptor 51L1 (OR51L1) of Homo sapiens (Human).